The following is a 478-amino-acid chain: Zinc metalloproteinase/disintegrin (478 aa).

Positions 1-20 (MIQVLLVTICLAAFPYQGSS) are cleaved as a signal peptide. The propeptide occupies 21-187 (IILESGNVND…PIKKASHLNL (167 aa)). One can recognise a Peptidase M12B domain in the interval 193–389 (RYVEIVIVVD…QKPQCILKKP (197 aa)). Cystine bridges form between Cys304/Cys384, Cys344/Cys368, and Cys346/Cys351. His329 lines the Zn(2+) pocket. Glu330 is an active-site residue. Positions 333 and 339 each coordinate Zn(2+). A propeptide spanning residues 390–408 (LRTDTVSTPVSGNELLEAR) is cleaved from the precursor. Positions 397 to 478 (TPVSGNELLE…ADCPRNVLYG (82 aa)) constitute a Disintegrin domain. 6 disulfides stabilise this stretch: Cys411/Cys420, Cys413/Cys421, Cys426/Cys440, Cys434/Cys464, Cys439/Cys443, and Cys452/Cys471. Positions 474–478 (NVLYG) are excised as a propeptide.

It belongs to the venom metalloproteinase (M12B) family. P-II subfamily. P-IIa sub-subfamily. Zn(2+) is required as a cofactor. Expressed by the venom gland.

The protein localises to the secreted. Functionally, snake venom zinc metalloproteinase that causes hemorrhage by provoking the degradation of the sub-endothelial matrix proteins (fibronectin, laminin, type IV collagen, nidogen, and gelatins). Its function is as follows. Displays low cytotoxicity. In vitro, inhibits cancer cell migration (human breast cancer cell line MDA-MB-231) with a significant rate after 24 hours of incubation. The chain is Zinc metalloproteinase/disintegrin (MPII) from Crotalus durissus collilineatus (Brazilian rattlesnake).